The sequence spans 359 residues: MAGMKTSPSQDEEACVLAIQLATSTVLPMILKSAIELDILNTISKAGPGNYLSPSDLASKLLMSNPHAPIMLERILRVLATYKVLGCKPSELSDGEVEWLYCWTPVCKFLSNNEDGASIAPLLLVHQDQVPMKSWYHLTDAILDGGTAFNKAYGMNIFDYASQDPQFNKVFNRSMAGHSTITMKKILETYNGFEGLKSIVDVGGGSGATLNMIISKYPTIKGINFDLPHVVGDSPIHPGVEHVGGDMFASVPKGDAIFLKWIFHSWSDEDCLRILKNCYEALADNKKVIVAEFIIPEVPGGSDDATKSVVHLDAVMLAYVPGGKERTEKEFEALATSAGFKSFRKVCCAFNTWIMEFSK.

His126 provides a ligand contact to bergaptol. S-adenosyl-L-homocysteine-binding residues include Ser179, Gly203, Asp226, Asp246, and Lys260. His264 provides a ligand contact to bergaptol. The active-site Proton acceptor is His264.

It belongs to the class I-like SAM-binding methyltransferase superfamily. Cation-independent O-methyltransferase family. COMT subfamily. Homodimer. Mostly expressed in roots and, to a lower extent, in stems and leaves.

Its subcellular location is the cytoplasm. The catalysed reaction is bergaptol + S-adenosyl-L-methionine = bergapten + S-adenosyl-L-homocysteine. It participates in aromatic compound metabolism. It functions in the pathway secondary metabolite biosynthesis. In terms of biological role, O-methyltransferase involved in the biosynthesis of furocoumarins natural products such as bergapten, a photosensitizer used for medical purpose such as treating psoriasis and vitiligo or facilitating resistance to microbial infection and other stresses. Catalyzes specifically the methylation of bergaptol. Not active on xanthotol, isoscopoletin, scopoletin and esculetin. This chain is Bergaptol O-methyltransferase, found in Kitagawia praeruptora (Peucedanum praeruptorum).